The sequence spans 350 residues: Dihydroorotate dehydrogenase (quinone) (350 aa).

FMN is bound by residues 67–71 and glycine 91; that span reads AGFDK. Substrate is bound at residue lysine 71. 116 to 120 contributes to the substrate binding site; that stretch reads NRMGF. 2 residues coordinate FMN: asparagine 144 and asparagine 177. Substrate is bound at residue asparagine 177. The active-site Nucleophile is the serine 180. Asparagine 182 contributes to the substrate binding site. The FMN site is built by lysine 213 and threonine 241. 242 to 243 serves as a coordination point for substrate; sequence NT. Residues 249 to 268 are disordered; it reads ASLHSDAADEEGGLSGAPIT. FMN contacts are provided by residues glycine 264, glycine 291, and 312–313; that span reads YT.

This sequence belongs to the dihydroorotate dehydrogenase family. Type 2 subfamily. As to quaternary structure, monomer. The cofactor is FMN.

The protein resides in the cell membrane. The enzyme catalyses (S)-dihydroorotate + a quinone = orotate + a quinol. It participates in pyrimidine metabolism; UMP biosynthesis via de novo pathway; orotate from (S)-dihydroorotate (quinone route): step 1/1. In terms of biological role, catalyzes the conversion of dihydroorotate to orotate with quinone as electron acceptor. The chain is Dihydroorotate dehydrogenase (quinone) from Natronomonas pharaonis (strain ATCC 35678 / DSM 2160 / CIP 103997 / JCM 8858 / NBRC 14720 / NCIMB 2260 / Gabara) (Halobacterium pharaonis).